The chain runs to 131 residues: Large ribosomal subunit protein bL19 (131 aa).

The interval 107 to 131 (GKSARIAERAERGSDKGKAAPAAAE) is disordered. Positions 111-124 (RIAERAERGSDKGK) are enriched in basic and acidic residues.

It belongs to the bacterial ribosomal protein bL19 family.

In terms of biological role, this protein is located at the 30S-50S ribosomal subunit interface and may play a role in the structure and function of the aminoacyl-tRNA binding site. This chain is Large ribosomal subunit protein bL19, found in Methylobacterium sp. (strain 4-46).